A 724-amino-acid polypeptide reads, in one-letter code: Threonine--tRNA ligase 2, cytoplasmic (724 aa).

A2 carries the N-acetylalanine modification. Residues 44–72 are a coiled coil; sequence QAEGPCLTREVAQLRAENRELRHCLYRLR. Residues 90-112 are disordered; the sequence is RAEAGRAAAGAQPPPSQSLEEDV. The TGS domain maps to 155–220; sequence DSSNVITVRV…EGDATVELLT (66 aa). Phosphoserine is present on S451.

It belongs to the class-II aminoacyl-tRNA synthetase family. May be a component of the multisynthetase complex (MSC), a large multi-subunit complex which contains at least eight different aminoacyl-tRNA synthetases plus three auxillary subunits AIMP1, AIMP2 and EEF1E1. Interacts with the MSC components EPRS1, AIMP1, AIMP2 and KARS1.

Its subcellular location is the cytoplasm. It is found in the nucleus. It carries out the reaction tRNA(Thr) + L-threonine + ATP = L-threonyl-tRNA(Thr) + AMP + diphosphate + H(+). Its function is as follows. Catalyzes the attachment of threonine to tRNA(Thr) in a two-step reaction: threonine is first activated by ATP to form Thr-AMP and then transferred to the acceptor end of tRNA(Thr). Also edits incorrectly charged tRNA(Thr) via its editing domain, at the post-transfer stage. The sequence is that of Threonine--tRNA ligase 2, cytoplasmic (TARS3) from Bos taurus (Bovine).